The chain runs to 502 residues: ATP synthase subunit beta (502 aa).

153–160 is an ATP binding site; that stretch reads GGAGVGKT.

It belongs to the ATPase alpha/beta chains family. In terms of assembly, F-type ATPases have 2 components, CF(1) - the catalytic core - and CF(0) - the membrane proton channel. CF(1) has five subunits: alpha(3), beta(3), gamma(1), delta(1), epsilon(1). CF(0) has three main subunits: a(1), b(2) and c(9-12). The alpha and beta chains form an alternating ring which encloses part of the gamma chain. CF(1) is attached to CF(0) by a central stalk formed by the gamma and epsilon chains, while a peripheral stalk is formed by the delta and b chains.

Its subcellular location is the cell membrane. It carries out the reaction ATP + H2O + 4 H(+)(in) = ADP + phosphate + 5 H(+)(out). In terms of biological role, produces ATP from ADP in the presence of a proton gradient across the membrane. The catalytic sites are hosted primarily by the beta subunits. This is ATP synthase subunit beta from Amoebophilus asiaticus (strain 5a2).